Consider the following 154-residue polypeptide: Large ribosomal subunit protein uL15 (154 aa).

A disordered region spans residues 1–54; that stretch reads MKLHDLTPAPGSRKPKKRVGRGPGGTDKTAGRGHKGQKSRSGAGKGPFFEGGRS.

The protein belongs to the universal ribosomal protein uL15 family. As to quaternary structure, part of the 50S ribosomal subunit.

Binds to the 23S rRNA. The protein is Large ribosomal subunit protein uL15 of Deinococcus geothermalis (strain DSM 11300 / CIP 105573 / AG-3a).